Reading from the N-terminus, the 84-residue chain is Protein SlyX homolog (84 aa).

This sequence belongs to the SlyX family.

The polypeptide is Protein SlyX homolog (Mannheimia succiniciproducens (strain KCTC 0769BP / MBEL55E)).